The primary structure comprises 329 residues: Glycerol-3-phosphate dehydrogenase [NAD(P)+] (329 aa).

NADPH-binding residues include S10, W11, R31, and K105. K105, G134, and S136 together coordinate sn-glycerol 3-phosphate. An NADPH-binding site is contributed by A138. Sn-glycerol 3-phosphate-binding residues include K189, D242, S252, R253, and N254. Residue K189 is the Proton acceptor of the active site. R253 is a binding site for NADPH. V277 and E279 together coordinate NADPH.

Belongs to the NAD-dependent glycerol-3-phosphate dehydrogenase family.

It localises to the cytoplasm. It carries out the reaction sn-glycerol 3-phosphate + NAD(+) = dihydroxyacetone phosphate + NADH + H(+). The catalysed reaction is sn-glycerol 3-phosphate + NADP(+) = dihydroxyacetone phosphate + NADPH + H(+). It participates in membrane lipid metabolism; glycerophospholipid metabolism. Catalyzes the reduction of the glycolytic intermediate dihydroxyacetone phosphate (DHAP) to sn-glycerol 3-phosphate (G3P), the key precursor for phospholipid synthesis. The sequence is that of Glycerol-3-phosphate dehydrogenase [NAD(P)+] from Neisseria meningitidis serogroup C (strain 053442).